The sequence spans 433 residues: Polygalacturonase ADPG2 (433 aa).

The N-terminal stretch at 1-24 is a signal peptide; it reads MARCTNLVTVFLLWALLMFSWCKA. PbH1 repeat units follow at residues 223–249, 250–271, 273–293, 303–324, and 332–353; these read CSNV…HITN, TQNI…SIES, SQNV…SIGS, VSGV…RIKT, and ASNI…IIDQ. Asp-264 serves as the catalytic Proton donor. His-287 is an active-site residue.

This sequence belongs to the glycosyl hydrolase 28 family. As to expression, expressed in roots and in the abscission zone of the sepals, petals and stamens of flowers, at the base of cauline leaves and in the basal cell of trichomes from senescing leaves. Found at the site of lateral root emergence, in the dehiscence zone of anthers and maturing siliques. Also expressed early in anther development, at the time of microspore separation. Expressed in germinating seeds, at the point at which the radicle broke through the seed coat. Not expressed at the junction between the seed and the funiculus or in the dehiscence zone of anthers or pods.

The protein localises to the secreted. Its subcellular location is the cell wall. It carries out the reaction (1,4-alpha-D-galacturonosyl)n+m + H2O = (1,4-alpha-D-galacturonosyl)n + (1,4-alpha-D-galacturonosyl)m.. Its function is as follows. Polygalacturonase involved in cell separation in the final stages of pod shatter, in anther dehiscence and in floral organ abscission. The sequence is that of Polygalacturonase ADPG2 (ADPG2) from Arabidopsis thaliana (Mouse-ear cress).